A 352-amino-acid chain; its full sequence is Ion-translocating oxidoreductase complex subunit D (352 aa).

4 helical membrane-spanning segments follow: residues 20 to 40 (IMLL…WFFG), 42 to 62 (GTLF…AIVL), 69 to 91 (VASH…SIPP), and 123 to 143 (PAMI…TSWL). Thr-187 is modified (FMN phosphoryl threonine). A run of 5 helical transmembrane segments spans residues 215–235 (LAGV…VFLL), 242–262 (WHIP…GWLF), 267–287 (LASP…FFIL), 301–321 (LIFG…GGYP), and 322–342 (DGVA…DYYT).

It belongs to the NqrB/RnfD family. The complex is composed of six subunits: RsxA, RsxB, RsxC, RsxD, RsxE and RsxG. Requires FMN as cofactor.

The protein localises to the cell inner membrane. Its function is as follows. Part of a membrane-bound complex that couples electron transfer with translocation of ions across the membrane. Required to maintain the reduced state of SoxR. In Salmonella dublin (strain CT_02021853), this protein is Ion-translocating oxidoreductase complex subunit D.